A 393-amino-acid polypeptide reads, in one-letter code: 1-deoxy-D-xylulose 5-phosphate reductoisomerase (393 aa).

The NADPH site is built by T10, G11, S12, I13, R37, Q38, and N124. K125 serves as a coordination point for 1-deoxy-D-xylulose 5-phosphate. Residue E126 coordinates NADPH. D150 provides a ligand contact to Mn(2+). 4 residues coordinate 1-deoxy-D-xylulose 5-phosphate: S151, E152, S179, and H202. A Mn(2+)-binding site is contributed by E152. G208 is an NADPH binding site. 4 residues coordinate 1-deoxy-D-xylulose 5-phosphate: S215, N220, K221, and E224. Residue E224 coordinates Mn(2+).

It belongs to the DXR family. Requires Mg(2+) as cofactor. Mn(2+) serves as cofactor.

It catalyses the reaction 2-C-methyl-D-erythritol 4-phosphate + NADP(+) = 1-deoxy-D-xylulose 5-phosphate + NADPH + H(+). It participates in isoprenoid biosynthesis; isopentenyl diphosphate biosynthesis via DXP pathway; isopentenyl diphosphate from 1-deoxy-D-xylulose 5-phosphate: step 1/6. Catalyzes the NADPH-dependent rearrangement and reduction of 1-deoxy-D-xylulose-5-phosphate (DXP) to 2-C-methyl-D-erythritol 4-phosphate (MEP). The polypeptide is 1-deoxy-D-xylulose 5-phosphate reductoisomerase (Cupriavidus taiwanensis (strain DSM 17343 / BCRC 17206 / CCUG 44338 / CIP 107171 / LMG 19424 / R1) (Ralstonia taiwanensis (strain LMG 19424))).